We begin with the raw amino-acid sequence, 602 residues long: Aspartate--tRNA(Asp/Asn) ligase (602 aa).

E170 is a binding site for L-aspartate. The aspartate stretch occupies residues 194 to 197 (QLFK). R216 is an L-aspartate binding site. ATP is bound by residues 216-218 (RDE) and Q225. H448 lines the L-aspartate pocket. E482 provides a ligand contact to ATP. Residue R489 participates in L-aspartate binding. Residue 534–537 (GWDR) participates in ATP binding. The interval 559–602 (GGVDPLTDAPAPISAQQRKESGIDAKPEKKSEDKKSEGDTAEAK) is disordered. Over residues 575 to 602 (QRKESGIDAKPEKKSEDKKSEGDTAEAK) the composition is skewed to basic and acidic residues.

The protein belongs to the class-II aminoacyl-tRNA synthetase family. Type 1 subfamily. Homodimer.

The protein resides in the cytoplasm. It catalyses the reaction tRNA(Asx) + L-aspartate + ATP = L-aspartyl-tRNA(Asx) + AMP + diphosphate. Its function is as follows. Aspartyl-tRNA synthetase with relaxed tRNA specificity since it is able to aspartylate not only its cognate tRNA(Asp) but also tRNA(Asn). Reaction proceeds in two steps: L-aspartate is first activated by ATP to form Asp-AMP and then transferred to the acceptor end of tRNA(Asp/Asn). This Rhodococcus erythropolis (strain PR4 / NBRC 100887) protein is Aspartate--tRNA(Asp/Asn) ligase.